A 336-amino-acid polypeptide reads, in one-letter code: tRNA N6-adenosine threonylcarbamoyltransferase (336 aa).

Fe cation contacts are provided by histidine 112 and histidine 116. Residues 136 to 140 (LVSGG), aspartate 169, glycine 182, and asparagine 276 contribute to the substrate site. Position 304 (aspartate 304) interacts with Fe cation.

The protein belongs to the KAE1 / TsaD family. It depends on Fe(2+) as a cofactor.

It is found in the cytoplasm. It carries out the reaction L-threonylcarbamoyladenylate + adenosine(37) in tRNA = N(6)-L-threonylcarbamoyladenosine(37) in tRNA + AMP + H(+). Required for the formation of a threonylcarbamoyl group on adenosine at position 37 (t(6)A37) in tRNAs that read codons beginning with adenine. Is involved in the transfer of the threonylcarbamoyl moiety of threonylcarbamoyl-AMP (TC-AMP) to the N6 group of A37, together with TsaE and TsaB. TsaD likely plays a direct catalytic role in this reaction. The chain is tRNA N6-adenosine threonylcarbamoyltransferase from Francisella tularensis subsp. novicida (strain U112).